Consider the following 236-residue polypeptide: SERTA domain-containing protein 1 (236 aa).

The SERTA domain maps to 38-85 (PTVASSSLFDLSVVKLHHSLRQSEPDLRHLVLVVNTLRRIQASMEPAP). The tract at residues 190 to 211 (ASEGLKPGPENGPAKEEPPELD) is disordered.

In terms of assembly, interacts with the PHD-bromodomain of TIF1, TRIM28/TIF1B and p300/CBP. Interacts with E2F1 and TFDP1; modulates transactivation activity of TFDP1/E2F complexes. Also interacts with CDK4. In terms of processing, polyubiquitinated, which promotes proteasomal degradation. As to expression, detected at in testis, lung and, at lower levels, in muscle, liver, spleen, brain and heart.

Functionally, acts at E2F-responsive promoters as coregulator to integrate signals provided by PHD- and/or bromodomain-containing transcription factors. Stimulates E2F1/TFDP1 transcriptional activity. Renders the activity of cyclin D1/CDK4 resistant to the inhibitory effects of CDKN2A/p16INK4A. In Mus musculus (Mouse), this protein is SERTA domain-containing protein 1 (Sertad1).